The following is a 376-amino-acid chain: Chaperone protein DnaJ (376 aa).

The J domain maps to 5–70; the sequence is DYYEVLGVGR…DKKAAYDQFG (66 aa). The CR-type zinc-finger motif lies at 132–210; sequence GLTKELRIPT…CHGDGRVEKS (79 aa). Zn(2+) is bound by residues cysteine 145, cysteine 148, cysteine 162, cysteine 165, cysteine 184, cysteine 187, cysteine 198, and cysteine 201. 4 CXXCXGXG motif repeats span residues 145-152, 162-169, 184-191, and 198-205; these read CDLCDGSG, CTTCHGQG, CPTCHGRG, and CSKCHGDG.

It belongs to the DnaJ family. In terms of assembly, homodimer. It depends on Zn(2+) as a cofactor.

Its subcellular location is the cytoplasm. Functionally, participates actively in the response to hyperosmotic and heat shock by preventing the aggregation of stress-denatured proteins and by disaggregating proteins, also in an autonomous, DnaK-independent fashion. Unfolded proteins bind initially to DnaJ; upon interaction with the DnaJ-bound protein, DnaK hydrolyzes its bound ATP, resulting in the formation of a stable complex. GrpE releases ADP from DnaK; ATP binding to DnaK triggers the release of the substrate protein, thus completing the reaction cycle. Several rounds of ATP-dependent interactions between DnaJ, DnaK and GrpE are required for fully efficient folding. Also involved, together with DnaK and GrpE, in the DNA replication of plasmids through activation of initiation proteins. The polypeptide is Chaperone protein DnaJ (Shewanella sp. (strain W3-18-1)).